Consider the following 329-residue polypeptide: Mitochondrial substrate carrier family protein Q (329 aa).

Solcar repeat units follow at residues 18–115, 125–206, and 216–310; these read VEAL…LKSI, LGTI…LRAL, and LGGL…VVIH. 6 consecutive transmembrane segments (helical) span residues 21–41, 95–115, 131–151, 175–195, 221–241, and 298–318; these read LGHA…TYPF, LIGI…LKSI, LAIA…IWVV, GFGG…NPSV, VFIL…PYLL, and AFMF…LFYL.

Belongs to the mitochondrial carrier (TC 2.A.29) family.

The protein localises to the peroxisome membrane. May have transport activity. The protein is Mitochondrial substrate carrier family protein Q (mcfQ) of Dictyostelium discoideum (Social amoeba).